A 67-amino-acid chain; its full sequence is Bombesin (67 aa).

The signal sequence occupies residues 1-30; the sequence is MLLLSAVKTLLLAWLGIVLVFMSIIKSAML. Positions 31-49 are excised as a propeptide; that stretch reads DFLQEAGKLEGIETYKKEA. A Pyrrolidone carboxylic acid modification is found at Gln-50. Met-64 is modified (methionine amide).

Expressed by the skin glands.

The protein localises to the secreted. Stimulates smooth muscle contraction in isolated rat stomach strip. The chain is Bombesin from Rana shuchinae (Sichuan frog).